Consider the following 306-residue polypeptide: Probable rRNA-processing protein EBP2 (306 aa).

Met-1 is modified (N-acetylmethionine). Disordered stretches follow at residues 1 to 20 and 77 to 99; these read MDTP…LVTD and VPEI…VDPE. Phosphothreonine is present on Thr-3. Residues Ser-7, Ser-9, Ser-11, Ser-13, and Ser-16 each carry the phosphoserine modification. A Glycyl lysine isopeptide (Lys-Gly) (interchain with G-Cter in SUMO2) cross-link involves residue Lys-94. A coiled-coil region spans residues 138-169; sequence AEMAKSDLQMQKIRQKLQTKQAAMERSEKAKQ. Glycyl lysine isopeptide (Lys-Gly) (interchain with G-Cter in SUMO2) cross-links involve residues Lys-179 and Lys-218. Residues 213 to 306 form a disordered region; sequence LEGDQKPLAQ…TREKMKNRTH (94 aa). Residues Ser-264 and Ser-270 each carry the phosphoserine modification. Residues 274–306 show a composition bias toward basic residues; sequence KTAHGRGLKRPGKKGSNKRPGKRTREKMKNRTH.

This sequence belongs to the EBP2 family. In terms of assembly, specifically interacts with EBV EBNA1. The EBNA1-EBP2 interaction is important for the stable segregation of EBV episomes during cell division. Interacts with WDR46. Ubiquitous.

It localises to the nucleus. It is found in the nucleolus. Its function is as follows. Required for the processing of the 27S pre-rRNA. The sequence is that of Probable rRNA-processing protein EBP2 (EBNA1BP2) from Homo sapiens (Human).